Reading from the N-terminus, the 431-residue chain is Serine--tRNA ligase (431 aa).

236-238 (TAE) contributes to the L-serine binding site. 267–269 (RSE) lines the ATP pocket. E290 lines the L-serine pocket. 354–357 (EISS) contacts ATP. S389 serves as a coordination point for L-serine.

This sequence belongs to the class-II aminoacyl-tRNA synthetase family. Type-1 seryl-tRNA synthetase subfamily. As to quaternary structure, homodimer. The tRNA molecule binds across the dimer.

It localises to the cytoplasm. The catalysed reaction is tRNA(Ser) + L-serine + ATP = L-seryl-tRNA(Ser) + AMP + diphosphate + H(+). It carries out the reaction tRNA(Sec) + L-serine + ATP = L-seryl-tRNA(Sec) + AMP + diphosphate + H(+). Its pathway is aminoacyl-tRNA biosynthesis; selenocysteinyl-tRNA(Sec) biosynthesis; L-seryl-tRNA(Sec) from L-serine and tRNA(Sec): step 1/1. Its function is as follows. Catalyzes the attachment of serine to tRNA(Ser). Is also able to aminoacylate tRNA(Sec) with serine, to form the misacylated tRNA L-seryl-tRNA(Sec), which will be further converted into selenocysteinyl-tRNA(Sec). This chain is Serine--tRNA ligase, found in Herminiimonas arsenicoxydans.